The chain runs to 517 residues: Methylmalonyl-CoA decarboxylase subunit alpha (517 aa).

The 257-residue stretch at 4-260 (AAKKIQDLQK…NNMEKAPEFG (257 aa)) folds into the CoA carboxyltransferase N-terminal domain. Positions 271 to 513 (ELDALMPDNP…REKLPAKKHG (243 aa)) constitute a CoA carboxyltransferase C-terminal domain.

Belongs to the AccD/PCCB family. In terms of assembly, the methylmalonyl-CoA decarboxylase is composed of four subunits: the carboxyltransferase alpha subunit (MmdA), the tunnel beta subunit (MmdB), the biotin-containing gamma subunit (MmdC) and the delta subunit (MmdD).

The protein resides in the cell membrane. It catalyses the reaction (S)-methylmalonyl-CoA + Na(+)(in) + H(+)(out) = propanoyl-CoA + Na(+)(out) + CO2. Carboxyltransferase subunit of the sodium ion pump methylmalonyl-CoA decarboxylase, which converts the chemical energy of a decarboxylation reaction into an electrochemical gradient of Na(+) ions across the cytoplasmic membrane, thereby creating a sodium ion motive force that is used for ATP synthesis. The alpha subunit catalyzes the Na(+)-independent carboxyltransfer from methylmalonyl-CoA to the prosthetic biotin group located on the gamma subunit. The protein is Methylmalonyl-CoA decarboxylase subunit alpha of Propionigenium modestum.